A 196-amino-acid chain; its full sequence is Molybdenum cofactor guanylyltransferase (196 aa).

GTP contacts are provided by residues 12 to 14 (LAG), Lys-25, Asn-53, Asp-71, and Asp-101. Residue Asp-101 coordinates Mg(2+).

The protein belongs to the MobA family. Monomer. Mg(2+) serves as cofactor.

Its subcellular location is the cytoplasm. It carries out the reaction Mo-molybdopterin + GTP + H(+) = Mo-molybdopterin guanine dinucleotide + diphosphate. Transfers a GMP moiety from GTP to Mo-molybdopterin (Mo-MPT) cofactor (Moco or molybdenum cofactor) to form Mo-molybdopterin guanine dinucleotide (Mo-MGD) cofactor. The sequence is that of Molybdenum cofactor guanylyltransferase from Bordetella petrii (strain ATCC BAA-461 / DSM 12804 / CCUG 43448).